The primary structure comprises 205 residues: GTP cyclohydrolase 1 (205 aa).

Residues Cys94, His97, and Cys165 each contribute to the Zn(2+) site.

This sequence belongs to the GTP cyclohydrolase I family. Toroid-shaped homodecamer, composed of two pentamers of five dimers.

The enzyme catalyses GTP + H2O = 7,8-dihydroneopterin 3'-triphosphate + formate + H(+). It functions in the pathway cofactor biosynthesis; 7,8-dihydroneopterin triphosphate biosynthesis; 7,8-dihydroneopterin triphosphate from GTP: step 1/1. The sequence is that of GTP cyclohydrolase 1 from Sinorhizobium medicae (strain WSM419) (Ensifer medicae).